Consider the following 248-residue polypeptide: PF03932 family protein CutC (248 aa).

The protein belongs to the CutC family.

The protein localises to the cytoplasm. In Porphyromonas gingivalis (strain ATCC 33277 / DSM 20709 / CIP 103683 / JCM 12257 / NCTC 11834 / 2561), this protein is PF03932 family protein CutC.